Reading from the N-terminus, the 619-residue chain is Bifunctional glutathionylspermidine synthetase/amidase (619 aa).

Positions 2-195 (SKGTTSQDAP…LGWMIQTEDT (194 aa)) are gsp amidase. Positions 34-176 (DPQEYEDDAV…MVVENGCYTL (143 aa)) constitute a Peptidase C51 domain. Residue Gln58 coordinates glutathionylspermidine. Cys59 acts as the S-(gamma-glutamyl-cysteinyl-glycyl)-cysteine intermediate in catalysis. Cys59 carries the cysteine sulfenic acid (-SOH); transient modification. Glutathionylspermidine is bound by residues Arg64, 78-81 (VGMA), and Asn149. The interval 196–205 (EYSLPQPEIA) is linker. The segment at 206-619 (GELLKISGAR…DIEPLIVVKK (414 aa)) is gsp synthetase. A glutathione-binding site is contributed by Arg316. 316 to 318 (RMD) lines the ATP pocket. Mg(2+) is bound by residues Asp318, Glu330, and Asn332. A glutathione-binding site is contributed by Ser335. Position 391 (Glu391) interacts with spermidine. Residues Glu392 and Thr446 each coordinate glutathione. ATP contacts are provided by residues Lys498, Lys533, 539–540 (CG), 568–571 (QQLW), Gln582, and 603–605 (LVI). Position 610 (Asp610) interacts with spermidine.

In the C-terminal section; belongs to the glutathionylspermidine synthase preATP-grasp family. Homodimer. Post-translationally, oxidation of Cys-59 to sulfenic acid during oxidative stress selectively inhibits the amidase activity which leads to a rapid increase in the amounts of intracellular Gsp and Gsp S-thiolated proteins (GspSSPs).

It carries out the reaction spermidine + glutathione + ATP = glutathionylspermidine + ADP + phosphate + H(+). It catalyses the reaction glutathionylspermidine + H2O = spermidine + glutathione. It functions in the pathway sulfur metabolism; glutathione metabolism. It participates in amine and polyamine metabolism; spermidine metabolism. Its activity is regulated as follows. When exposed to oxidative stress, Gsp amidase activity is transiently inhibited in vivo by oxidation of the catalytic Cys-59 thiol to sulfenic acid; this modification does not affect Gsp synthetase activity. Gsp amidase activity is negatively autoregulated by the Gsp synthetase domain, and is activated by the Gsp synthetase substrates, GSH and ATP-Mg(2+); the occupancy of the synthetase active site may initiate communication through the protein as manifest by the release of inhibition of the amidase activity. A tetrahedral phosphonate analog of glutathionylspermidine, designed as a mimic of the proposed tetrahedral intermediate for either reaction, inhibits the synthetase activity (Ki of 10 uM) but does not inhibit the amidase activity. Amidase activity is inhibited by iodoacetamide in vitro. In terms of biological role, catalyzes the formation of an amide bond between glutathione (GSH) and spermidine coupled with hydrolysis of ATP; also catalyzes the opposing reaction, i.e. the hydrolysis of glutathionylspermidine (Gsp) back to glutathione and spermidine. The amidase active site can also hydrolyze Gsp-disulfide (Gsp-S-S-Gsp) to Gsp-SG and Gsp S-thiolated proteins (GspSSPs) to GSH S-thiolated protein (GSSPs). Likely acts synergistically with glutaredoxin to regulate the redox environment of E.coli and defend against oxidative damage. In vitro, the amidase active site also catalyzes hydrolysis of amide and ester derivatives of glutathione (e.g. glutathione ethyl ester and glutathione amide) but lacks activity toward acetylspermidine (N1 and N8) and acetylspermine (N1). In Escherichia coli (strain K12), this protein is Bifunctional glutathionylspermidine synthetase/amidase (gss).